We begin with the raw amino-acid sequence, 134 residues long: Methylglyoxal synthase (134 aa).

The MGS-like domain maps to 1 to 134 (MHIALIAHDE…DWRDLRRNDE (134 aa)). Residues His-8, Lys-12, 34 to 37 (TGTT), and 54 to 55 (SG) each bind substrate. Asp-60 acts as the Proton donor/acceptor in catalysis. Residue His-87 participates in substrate binding.

The protein belongs to the methylglyoxal synthase family.

The enzyme catalyses dihydroxyacetone phosphate = methylglyoxal + phosphate. Functionally, catalyzes the formation of methylglyoxal from dihydroxyacetone phosphate. In Listeria monocytogenes serotype 4b (strain CLIP80459), this protein is Methylglyoxal synthase.